We begin with the raw amino-acid sequence, 1162 residues long: DNA-directed RNA polymerase subunit beta 1 (1162 aa).

This sequence belongs to the RNA polymerase beta chain family. As to quaternary structure, the RNAP catalytic core consists of 2 alpha, 1 beta, 1 beta' and 1 omega subunit. When a sigma factor is associated with the core the holoenzyme is formed, which can initiate transcription.

It catalyses the reaction RNA(n) + a ribonucleoside 5'-triphosphate = RNA(n+1) + diphosphate. In terms of biological role, DNA-dependent RNA polymerase catalyzes the transcription of DNA into RNA using the four ribonucleoside triphosphates as substrates. The polypeptide is DNA-directed RNA polymerase subunit beta 1 (Nocardia farcinica (strain IFM 10152)).